Consider the following 123-residue polypeptide: Histone H2B (123 aa).

The segment at 1-31 is disordered; it reads MPPKVASKGAKKAASKAKAARSGEKKKKRRR. Residues 9–31 are compositionally biased toward basic residues; sequence GAKKAASKAKAARSGEKKKKRRR. A glycan (O-linked (GlcNAc) serine) is linked at Ser110. Residue Lys118 forms a Glycyl lysine isopeptide (Lys-Gly) (interchain with G-Cter in ubiquitin) linkage.

It belongs to the histone H2B family. In terms of assembly, the nucleosome is a histone octamer containing two molecules each of H2A, H2B, H3 and H4 assembled in one H3-H4 heterotetramer and two H2A-H2B heterodimers. The octamer wraps approximately 147 bp of DNA. Post-translationally, monoubiquitination of Lys-118 gives a specific tag for epigenetic transcriptional activation and is also prerequisite for histone H3 'Lys-4' and 'Lys-79' methylation. In terms of processing, glcNAcylation at Ser-110 promotes monoubiquitination of Lys-118. It fluctuates in response to extracellular glucose, and associates with transcribed genes.

Its subcellular location is the nucleus. It localises to the chromosome. Functionally, core component of nucleosome. Nucleosomes wrap and compact DNA into chromatin, limiting DNA accessibility to the cellular machineries which require DNA as a template. Histones thereby play a central role in transcription regulation, DNA repair, DNA replication and chromosomal stability. DNA accessibility is regulated via a complex set of post-translational modifications of histones, also called histone code, and nucleosome remodeling. This Platynereis dumerilii (Dumeril's clam worm) protein is Histone H2B.